The primary structure comprises 265 residues: 5'-nucleotidase SurE (265 aa).

The a divalent metal cation site is built by aspartate 8, aspartate 9, serine 39, and asparagine 96.

It belongs to the SurE nucleotidase family. A divalent metal cation serves as cofactor.

Its subcellular location is the cytoplasm. It carries out the reaction a ribonucleoside 5'-phosphate + H2O = a ribonucleoside + phosphate. Nucleotidase that shows phosphatase activity on nucleoside 5'-monophosphates. The polypeptide is 5'-nucleotidase SurE (Dehalococcoides mccartyi (strain CBDB1)).